We begin with the raw amino-acid sequence, 1436 residues long: Non-structural polyprotein 1AB (1436 aa).

The stretch at K104–E142 forms a coiled coil. Transmembrane regions (helical) follow at residues W156–S176, V239–G259, V286–V306, L313–M333, and G344–T364. Residues H461, D489, and S551 each act as charge relay system; for serine protease activity in the active site. Positions V587–Q620 form a coiled coil. At Y693 the chain carries O-(5'-phospho-RNA)-tyrosine. Disordered regions lie at residues A756–T828 and S913–G934. One can recognise a RdRp catalytic domain in the interval K1181 to E1307.

This sequence belongs to the astroviridae polyprotein 1AB family. Monomer. In terms of processing, cleaved by the viral and host proteases. The protease is probably autocatalytically cleaved.

It localises to the host membrane. The enzyme catalyses RNA(n) + a ribonucleoside 5'-triphosphate = RNA(n+1) + diphosphate. Responsible for the cleavage of the polyprotein into functional products. Its function is as follows. Protein covalently attached to the 5' extremity of the genomic and subgenomic RNAs. It may serve as a primer for the replicase. In Homo sapiens (Human), this protein is Non-structural polyprotein 1AB (ORF1).